Reading from the N-terminus, the 348-residue chain is Myricetin O-methyltransferase (348 aa).

An N-acetylmethionine modification is found at methionine 1. 5 residues coordinate S-adenosyl-L-methionine: glycine 189, aspartate 212, aspartate 232, methionine 233, and lysine 246. The active-site Proton acceptor is histidine 250.

The N-terminus is blocked.

It carries out the reaction S-adenosyl-L-methionine + a 3'-hydroxyflavonoid = S-adenosyl-L-homocysteine + a 3'-methoxyflavonoid.. It catalyses the reaction S-adenosyl-L-methionine + a 5'-hydroxy-3'-methoxyflavonoid = S-adenosyl-L-homocysteine + a 3',5'-dimethoxyflavonoid.. In terms of biological role, methylates myricetin and dihydromyricetin at 2 sites. Inactive towards 16-hydroxytabersonine, the phenylpropanoids 5-hydroxyferulate, caffeate and their CoA-esters, flavones and flavanones possessing 2 or 3 B-ring hydroxyl groups. This is Myricetin O-methyltransferase from Catharanthus roseus (Madagascar periwinkle).